Consider the following 629-residue polypeptide: (-)-alpha-pinene synthase, chloroplastic (629 aa).

The transit peptide at 1–48 (MSPVSVISLPSDLCLPTSFIDRSGRELIPLHITIPNVAMRRQGKLMTR) directs the protein to the chloroplast. Residues D380, D384, and D532 each contribute to the Mg(2+) site. The DDXXD motif signature appears at 380–384 (DDMYD). S540 lines the K(+) pocket.

The protein belongs to the terpene synthase family. Tpsd subfamily. The cofactor is Mg(2+). It depends on Mn(2+) as a cofactor. Requires K(+) as cofactor.

It localises to the plastid. The protein localises to the chloroplast. It carries out the reaction (2E)-geranyl diphosphate = (1S,5S)-alpha-pinene + diphosphate. It functions in the pathway terpene metabolism; oleoresin biosynthesis. Functionally, involved in defensive oleoresin formation in conifers in response to insect attack or other injury. Involved in monoterpene (C10) olefins biosynthesis. Produces mainly (-)-alpha-pinene (79%) and lesser amounts of (-)-beta-pinene (4.2%), nearly racemic mixtures of camphene (2.8% (+)/2.2% (-)) and limonene (2.4% (+)/3.7% (-)), as well as small amounts of (+)-alpha-pinene (3.3%) and (+)-beta-pinene (2.4%). The sequence is that of (-)-alpha-pinene synthase, chloroplastic (PT1) from Pinus taeda (Loblolly pine).